The primary structure comprises 407 residues: Argininosuccinate synthase (407 aa).

10–18 (AYSGGLDTS) is an ATP binding site. L-citrulline is bound by residues Y88 and S93. G118 is an ATP binding site. L-aspartate contacts are provided by T120, N124, and D125. N124 is an L-citrulline binding site. L-citrulline contacts are provided by R128, S177, S186, E263, and Y275.

It belongs to the argininosuccinate synthase family. Type 1 subfamily. Homotetramer.

It localises to the cytoplasm. It catalyses the reaction L-citrulline + L-aspartate + ATP = 2-(N(omega)-L-arginino)succinate + AMP + diphosphate + H(+). It functions in the pathway amino-acid biosynthesis; L-arginine biosynthesis; L-arginine from L-ornithine and carbamoyl phosphate: step 2/3. The protein is Argininosuccinate synthase of Clostridium botulinum (strain Alaska E43 / Type E3).